The sequence spans 155 residues: Small ribosomal subunit protein uS7 (155 aa).

The protein belongs to the universal ribosomal protein uS7 family. As to quaternary structure, part of the 30S ribosomal subunit. Contacts proteins S9 and S11.

Functionally, one of the primary rRNA binding proteins, it binds directly to 16S rRNA where it nucleates assembly of the head domain of the 30S subunit. Is located at the subunit interface close to the decoding center, probably blocks exit of the E-site tRNA. The chain is Small ribosomal subunit protein uS7 from Mycoplasma genitalium (strain ATCC 33530 / DSM 19775 / NCTC 10195 / G37) (Mycoplasmoides genitalium).